Consider the following 207-residue polypeptide: Glycerol-3-phosphate acyltransferase (207 aa).

Helical transmembrane passes span 8–28 (NIVFYLLAYLIGSIPFGLILA), 64–84 (LGIATVLLDALKGTLVLLVGI), 92–112 (TLWAIAVLAVLGHCYSIYLGL), 122–142 (LGVYIVLIPYSTLIGAVVWIV), 154–174 (SLLGLIAAVISAIFIYNGLGI), and 176–196 (SNIPMYLIAFIILYKHIPNIV).

Belongs to the PlsY family. In terms of assembly, probably interacts with PlsX.

The protein resides in the cell inner membrane. The enzyme catalyses an acyl phosphate + sn-glycerol 3-phosphate = a 1-acyl-sn-glycero-3-phosphate + phosphate. It participates in lipid metabolism; phospholipid metabolism. Catalyzes the transfer of an acyl group from acyl-phosphate (acyl-PO(4)) to glycerol-3-phosphate (G3P) to form lysophosphatidic acid (LPA). This enzyme utilizes acyl-phosphate as fatty acyl donor, but not acyl-CoA or acyl-ACP. In Aliarcobacter butzleri (strain RM4018) (Arcobacter butzleri), this protein is Glycerol-3-phosphate acyltransferase.